We begin with the raw amino-acid sequence, 178 residues long: uncharacterized protein (178 aa).

It belongs to the tail fiber family.

This is an uncharacterized protein from Escherichia coli (strain K12).